Reading from the N-terminus, the 123-residue chain is Small ribosomal subunit protein eS25 (123 aa).

Over residues 1 to 13 the composition is skewed to basic and acidic residues; it reads MPPKKDTKGDSKK. A disordered region spans residues 1-34; that stretch reads MPPKKDTKGDSKKGQKAKAGSGGGKAKKKKWSKG. Over residues 25–34 the composition is skewed to basic residues; that stretch reads KAKKKKWSKG.

It belongs to the eukaryotic ribosomal protein eS25 family.

In Branchiostoma belcheri (Amphioxus), this protein is Small ribosomal subunit protein eS25 (RPS25).